The following is a 262-amino-acid chain: Tryptophan synthase alpha chain (262 aa).

Residues Glu48 and Asp59 each act as proton acceptor in the active site.

Belongs to the TrpA family. In terms of assembly, tetramer of two alpha and two beta chains.

The catalysed reaction is (1S,2R)-1-C-(indol-3-yl)glycerol 3-phosphate + L-serine = D-glyceraldehyde 3-phosphate + L-tryptophan + H2O. The protein operates within amino-acid biosynthesis; L-tryptophan biosynthesis; L-tryptophan from chorismate: step 5/5. Its function is as follows. The alpha subunit is responsible for the aldol cleavage of indoleglycerol phosphate to indole and glyceraldehyde 3-phosphate. The protein is Tryptophan synthase alpha chain of Helicobacter pylori (strain ATCC 700392 / 26695) (Campylobacter pylori).